Consider the following 161-residue polypeptide: MSTTPTLSHLDESGQIRMVDVGHKTDTDRVAIARGSVRMNATAYGLLTQPGQGKGEVLNTARVAAVLAAKRCAELIPLCHSLPLAFVGIDFELDEAAHSVHIRATCRTQYKTGVEMEAMTACSVAALTIYDMCKAADKGIVIEQIRLQYKAGGKSGEWRND.

Residues 78–80 (LCH) and 116–117 (ME) contribute to the substrate site. Residue D131 is part of the active site.

The protein belongs to the MoaC family. Homohexamer; trimer of dimers.

It carries out the reaction (8S)-3',8-cyclo-7,8-dihydroguanosine 5'-triphosphate = cyclic pyranopterin phosphate + diphosphate. The protein operates within cofactor biosynthesis; molybdopterin biosynthesis. Functionally, catalyzes the conversion of (8S)-3',8-cyclo-7,8-dihydroguanosine 5'-triphosphate to cyclic pyranopterin monophosphate (cPMP). The chain is Cyclic pyranopterin monophosphate synthase from Bordetella pertussis (strain Tohama I / ATCC BAA-589 / NCTC 13251).